The sequence spans 124 residues: MVKLTSIAAGVAAIAAGIAAAPATTTLSPSDERVNLVELGVYVSDIRAHLAQYYLFQAAHPTETYPVEIAEAVFNYGDFTTMLTGIPAEQVTRVITGVPWYSTRLRPAISSALSKDGIYTAIPK.

Residues 7-24 traverse the membrane as a helical segment; it reads IAAGVAAIAAGIAAAPAT.

It belongs to the SRP1/TIP1 family. Seripauperin subfamily.

The protein localises to the membrane. This is Seripauperin-3 (PAU3) from Saccharomyces cerevisiae (strain ATCC 204508 / S288c) (Baker's yeast).